Reading from the N-terminus, the 187-residue chain is Putative manganese efflux pump MntP (187 aa).

Helical transmembrane passes span 3 to 23 (YYTL…VSVG), 39 to 59 (IALC…YVGS), 65 to 85 (ISEF…INMI), 106 to 126 (LTML…SFAF), 129 to 149 (VNIW…SLFG), and 166 to 186 (LLGG…HRVF).

Belongs to the MntP (TC 9.B.29) family.

Its subcellular location is the cell inner membrane. Probably functions as a manganese efflux pump. The polypeptide is Putative manganese efflux pump MntP (Actinobacillus succinogenes (strain ATCC 55618 / DSM 22257 / CCUG 43843 / 130Z)).